The sequence spans 435 residues: Cytochrome c biogenesis protein CcsB (435 aa).

A run of 3 helical transmembrane segments spans residues 11 to 31, 69 to 89, and 159 to 179; these read LRVA…GTAL, SDWF…CSWR, and VGPL…VWGV.

This sequence belongs to the Ccs1/CcsB family. May interact with CcsA.

It is found in the plastid. The protein localises to the organellar chromatophore thylakoid membrane. Required during biogenesis of c-type cytochromes (cytochrome c6 and cytochrome f) at the step of heme attachment. The protein is Cytochrome c biogenesis protein CcsB of Paulinella chromatophora.